A 463-amino-acid polypeptide reads, in one-letter code: L-seryl-tRNA(Sec) selenium transferase (463 aa).

N6-(pyridoxal phosphate)lysine is present on lysine 295.

The protein belongs to the SelA family. As to quaternary structure, homodecamer; pentamer of dimers. Binds only one seryl-tRNA(Sec) per dimer. It depends on pyridoxal 5'-phosphate as a cofactor.

It is found in the cytoplasm. It catalyses the reaction L-seryl-tRNA(Sec) + selenophosphate + H(+) = L-selenocysteinyl-tRNA(Sec) + phosphate. Its pathway is aminoacyl-tRNA biosynthesis; selenocysteinyl-tRNA(Sec) biosynthesis; selenocysteinyl-tRNA(Sec) from L-seryl-tRNA(Sec) (bacterial route): step 1/1. Its function is as follows. Converts seryl-tRNA(Sec) to selenocysteinyl-tRNA(Sec) required for selenoprotein biosynthesis. The chain is L-seryl-tRNA(Sec) selenium transferase from Escherichia coli O45:K1 (strain S88 / ExPEC).